The sequence spans 307 residues: Replication termination factor 2 (307 aa).

Residues 193 to 296 are disordered; sequence AKLEKKTKKP…SSAKRSKEES (104 aa). Basic and acidic residues predominate over residues 227–241; the sequence is GKPEEADPDPREKKS. Phosphoserine is present on serine 288.

Belongs to the rtf2 family. Interacts with DDI2; probably also interacts with DDI1. In terms of processing, undergoes proteasomal degradation, via DDI1 and DDI2. Removal from stalled replisomes and degradation are required for genome stability.

Its subcellular location is the chromosome. In terms of biological role, replication termination factor which is a component of the elongating replisome. Required for ATR pathway signaling upon DNA damage and has a positive activity during DNA replication. Might function to facilitate fork pausing at replication fork barriers like the rDNA. May be globally required to stimulate ATR signaling after the fork stalls or encounters a lesion. Interacts with nascent DNA. The polypeptide is Replication termination factor 2 (Mus musculus (Mouse)).